A 395-amino-acid polypeptide reads, in one-letter code: GPI-anchor transamidase (395 aa).

The signal sequence occupies residues 1–27; the sequence is MAVTDSLSRAATVLATVLLLSFGSVAA. At 28 to 368 the chain is on the lumenal side; the sequence is SHIEDQAEQF…PKLKDWHPPG (341 aa). Residues Asp-79, Ile-82, Glu-118, and Asp-120 each coordinate Ca(2+). His-164 acts as the Proton donor in catalysis. The Nucleophile; acyl-thioester intermediate role is filled by Cys-206. Residues Cys-206, Ser-232, and Ser-234 each coordinate a protein. Residues 231-236 form an autoinhibitory loop region; that stretch reads DSLSHQ. An intrachain disulfide couples Cys-275 to Cys-280. A helical transmembrane segment spans residues 369–385; it reads GFILGLWALIIMVFFKT. Residues 386-395 lie on the Cytoplasmic side of the membrane; the sequence is YGIKHMKFIF.

It belongs to the peptidase C13 family. As to quaternary structure, heteropentamer. Part of the GPI-anchor transamidase complex, consisting of PIGK, PIGT, PIGS, PIGU and GAA1. Interacts with GPAA1. Interacts with PIGT; this interaction, via a disulfide link, stabilizes the expression of GAA1 and PIGK and links them to PIGS. Post-translationally, the disulfide bond between PIGK/GPI8 and PIGT is important for normal enzyme activity.

It localises to the endoplasmic reticulum membrane. The protein operates within glycolipid biosynthesis; glycosylphosphatidylinositol-anchor biosynthesis. Its activity is regulated as follows. In the absence of proproteins substrates, exists in an inactive state with a disrupted catalytic site by an autoinhibitory loop. The binding of proprotein substrates, particularly the CSP region, to GPI-T triggers concerted conformational changes that alleviate the inhibition by the autoinhibitory loop. Meanwhile, proprotein residues near the omega- site induce the formation of a catalytic cleft for catalysis, following which the products are released and GPI-T reverts to the inactive state. Functionally, catalytic subunit of the glycosylphosphatidylinositol-anchor (GPI-anchor) transamidase (GPI-T) complex that catalyzes the formation of the linkage between a proprotein and a GPI-anchor and participates in GPI anchored protein biosynthesis. Recognizes diverse proproteins at a C-terminal signal peptide (CSP) region that lacks consensus sequence and replaces it with a GPI-anchor via a transamidation reaction. Transamidation catalysis reaction follows a two-phase mechanism. In the acyl-enzyme phase, the carbonyl group of the proproteins's omega-site undergoes a nucleophilic attack forming an enzyme-substrate thioester bond. Followed by a general acid catalysis that allows CSP releasing, regenerating the carbonyl, and forming the acyl-enzyme intermediate. In the GPI-anchor attachment phase, the amino group of the GPI-anchor's ethanolamine phosphate, the one on third mannose (EtNP3), mediates a nucleophilic attack on the carbonyl of the acyl-enzyme intermediate, replacing the CSP, allowing GPI-anchor attachment to the omega-residue, therefore forming the product and freeing the enzyme. This is GPI-anchor transamidase from Homo sapiens (Human).